Here is a 160-residue protein sequence, read N- to C-terminus: E3 ubiquitin ligase complex SCF subunit sconC (160 aa).

An interaction with the F-box domain of F-box proteins region spans residues 101 to 160; it reads ILAANYLDIKALLDVGCKTVANMIKGKSPEEIRKTFNIQNDFTPEEEDQIRRENEWAEDR.

The protein belongs to the SKP1 family. In terms of assembly, component of the SCF (SKP1-CUL1-F-box protein) E3 ubiquitin ligase complexes.

It functions in the pathway protein modification; protein ubiquitination. Its function is as follows. Essential component of the SCF (SKP1-CUL1-F-box protein) E3 ubiquitin ligase complexes, which mediate the ubiquitination and subsequent proteasomal degradation of target proteins. Controls sulfur metabolite repression, probably by mediating the inactivation or degradation of the metR transcription factor. This chain is E3 ubiquitin ligase complex SCF subunit sconC (sconC), found in Talaromyces marneffei (strain ATCC 18224 / CBS 334.59 / QM 7333) (Penicillium marneffei).